Reading from the N-terminus, the 456-residue chain is Trigger factor (456 aa).

The PPIase FKBP-type domain maps to 166–245 (GDYANIDLNA…VNSVKAEELP (80 aa)).

Belongs to the FKBP-type PPIase family. Tig subfamily.

It is found in the cytoplasm. The enzyme catalyses [protein]-peptidylproline (omega=180) = [protein]-peptidylproline (omega=0). Involved in protein export. Acts as a chaperone by maintaining the newly synthesized protein in an open conformation. Functions as a peptidyl-prolyl cis-trans isomerase. The polypeptide is Trigger factor (Bifidobacterium adolescentis (strain ATCC 15703 / DSM 20083 / NCTC 11814 / E194a)).